A 213-amino-acid chain; its full sequence is MSTSYSANQYESAFKSQKLQNWTIPKQFKERPSAAEGYTTFIATDRGHLLPGVRTKHRSAWPAFQGTWDLPRRIPPVSMNPTARSQVGQDRLMTWGQMKITTKQAHKGPGDSQAMNRNSHDVENINVDQPAEQSKISIDPDENQPEKPKSQHIQDQSRPASQQAQPIPENLNINQSRPASQRSQKAPSRPATQQNQAEFRPPTHNSRPASQEK.

A disordered region spans residues 127-213 (VDQPAEQSKI…HNSRPASQEK (87 aa)). A compositionally biased stretch (polar residues) spans 151 to 213 (QHIQDQSRPA…HNSRPASQEK (63 aa)).

The protein belongs to the Flattop family.

The protein resides in the cytoplasm. It is found in the cytoskeleton. It localises to the cilium basal body. Its subcellular location is the cell projection. The protein localises to the cilium. The protein resides in the apical cell membrane. It is found in the cilium axoneme. Microtubule inner protein (MIP) part of the dynein-decorated doublet microtubules (DMTs) in cilia axoneme. Acts as a regulator of cilium basal body docking and positioning in mono- and multiciliated cells. Regulates basal body docking and cilia formation in multiciliated lung cells. Regulates kinocilium positioning and stereocilia bundle morphogenesis in the inner ear. In Danio rerio (Zebrafish), this protein is Protein Flattop.